The following is an 86-amino-acid chain: Late effector protein 1 (86 aa).

Positions 1 to 24 (MRSHQMAAFFAVSLMMMVVLGALS) are cleaved as a signal peptide.

The protein belongs to the lep1 family. In terms of assembly, interacts at the cell wall with secreted rep1 repellent peptides.

The protein localises to the secreted. The protein resides in the cell wall. In terms of biological role, core effector contributing to spore formation and tumor formation at the host plant. Modulates surface hydrophobicity promoting cell-cell or cell-surface contacts. Lep1 and rep1 interact in aerial hyphae to form a strong hydrophobic layer. Plays a crucial role in hyphal aggregation that might be a prerequisite for strong proliferation of diploid cells and for induction of the morphological changes associated with spore formation. The polypeptide is Late effector protein 1 (Mycosarcoma maydis (Corn smut fungus)).